Reading from the N-terminus, the 299-residue chain is Protein LacX, plasmid (299 aa).

In Lactococcus lactis subsp. lactis (Streptococcus lactis), this protein is Protein LacX, plasmid (lacX).